The sequence spans 114 residues: Pro-FMRFamide-related neuropeptide FF (114 aa).

The first 21 residues, 1–21 (MDSKWAAVLLLLLLLRNWGHA), serve as a signal peptide directing secretion. Positions 22 to 69 (EEAGSWGEDQVFAEEDKGPHPSQYAHTPDRIQTPGSLMRVLLQAMERP) are excised as a propeptide. A disordered region spans residues 29 to 51 (EDQVFAEEDKGPHPSQYAHTPDR). F82 bears the Phenylalanine amide mark. Residues 85–100 (NAWGPWSKEQLSPQAR) constitute a propeptide that is removed on maturation. F111 carries the phenylalanine amide modification.

It belongs to the FARP (FMRFamide related peptide) family.

It localises to the secreted. Morphine modulating peptides. Have wide-ranging physiologic effects, including the modulation of morphine-induced analgesia, elevation of arterial blood pressure, and increased somatostatin secretion from the pancreas. Neuropeptide FF and SF potentiate and sensitize ASIC2 and ASIC3 channels. The sequence is that of Pro-FMRFamide-related neuropeptide FF (Npff) from Rattus norvegicus (Rat).